We begin with the raw amino-acid sequence, 150 residues long: MQTQKPTLELVACDAAYRENPTALFHQVCGARPATLLLESADIDSKDDLKSLLLVDSALRITAIGDTVTIQALSANGASLLPLLDAALPAGVENKQQPNGRHLRFPAVSPLLDEDVRLRSLSAPDAFRPLQELVNVPAQEREVMFLGGMF.

Serine 40 is an L-tryptophan binding site. Residue arginine 119 coordinates chorismate.

It belongs to the anthranilate synthase component I family. Heterotetramer consisting of two non-identical subunits: a beta subunit (TrpG) and a large alpha subunit (TrpE). Mg(2+) serves as cofactor.

The catalysed reaction is chorismate + L-glutamine = anthranilate + pyruvate + L-glutamate + H(+). The protein operates within amino-acid biosynthesis; L-tryptophan biosynthesis; L-tryptophan from chorismate: step 1/5. Its activity is regulated as follows. Feedback inhibited by tryptophan. Part of a heterotetrameric complex that catalyzes the two-step biosynthesis of anthranilate, an intermediate in the biosynthesis of L-tryptophan. In the first step, the glutamine-binding beta subunit (TrpG) of anthranilate synthase (AS) provides the glutamine amidotransferase activity which generates ammonia as a substrate that, along with chorismate, is used in the second step, catalyzed by the large alpha subunit of AS (TrpE) to produce anthranilate. In the absence of TrpG, TrpE can synthesize anthranilate directly from chorismate and high concentrations of ammonia. This chain is Anthranilate synthase component 1 (trpE), found in Citrobacter freundii.